Reading from the N-terminus, the 187-residue chain is Keratin-associated protein 5-8 (187 aa).

Tandem repeats lie at residues 28–31, 34–37, 40–43, 109–112, 119–122, 138–141, 148–151, 167–170, and 177–180. Positions 28–180 are 9 X 4 AA repeats of C-C-X-P; that stretch reads CCVPICCCKP…CCSQSSCCVP (153 aa).

It belongs to the KRTAP type 5 family. In terms of tissue distribution, restricted to hair root, not detected in any other tissues. Expressed in cuticle layers of differentiating hair follicles.

In the hair cortex, hair keratin intermediate filaments are embedded in an interfilamentous matrix, consisting of hair keratin-associated protein (KRTAP), which are essential for the formation of a rigid and resistant hair shaft through their extensive disulfide bond cross-linking with abundant cysteine residues of hair keratins. The matrix proteins include the high-sulfur and high-glycine-tyrosine keratins. This is Keratin-associated protein 5-8 (KRTAP5-8) from Homo sapiens (Human).